The following is a 201-amino-acid chain: Small ribosomal subunit protein uS4c (201 aa).

The disordered stretch occupies residues 14–43 (RLGALPGLTSKRPRAGSDLRNQSRPGKKSQ). Residues 89 to 169 (MRLDNILFRL…LPKHLTFHTL (81 aa)) form the S4 RNA-binding domain.

This sequence belongs to the universal ribosomal protein uS4 family. As to quaternary structure, part of the 30S ribosomal subunit. Contacts protein S5. The interaction surface between S4 and S5 is involved in control of translational fidelity.

Its subcellular location is the plastid. The protein localises to the chloroplast. Its function is as follows. One of the primary rRNA binding proteins, it binds directly to 16S rRNA where it nucleates assembly of the body of the 30S subunit. In terms of biological role, with S5 and S12 plays an important role in translational accuracy. This Gossypium hirsutum (Upland cotton) protein is Small ribosomal subunit protein uS4c (rps4).